We begin with the raw amino-acid sequence, 1072 residues long: Pre-mRNA-processing ATP-dependent RNA helicase PRP5 (1072 aa).

Residues 1–19 are compositionally biased toward low complexity; it reads MPRSPYRSSNRSYRSPSPS. Disordered stretches follow at residues 1-219 and 245-293; these read MPRS…SDRK and ADLA…RDNV. 2 stretches are compositionally biased toward basic and acidic residues: residues 20 to 114 and 136 to 159; these read RYDR…ERRS and EEKK…KEGK. Residues 170–183 are compositionally biased toward pro residues; it reads TAPPPVTSGLPPKP. The segment covering 193 to 204 has biased composition (low complexity); sequence LPLKPTNPTPLK. The segment covering 258–277 has biased composition (basic and acidic residues); it reads TVVKKEEEKEEKMDIDKKAE. Positions 403–431 match the Q motif motif; sequence RNWGAFGLPQGCLDVIKHQGWETPTSIQA. One can recognise a Helicase ATP-binding domain in the interval 434-612; sequence IPAIMSGRDV…RRILVKPLEI (179 aa). 447-454 contacts ATP; the sequence is AKTGSGKT. The short motif at 560–563 is the DEAD box element; sequence DEAD. The region spanning 639 to 790 is the Helicase C-terminal domain; sequence RLLEILGEMG…FIPDDLKKMS (152 aa). Residues 803–839 are disordered; the sequence is RAAGSGYSGKGLERIERRREEKDRAEKTTYGDTSEAL. Residues 813-831 show a composition bias toward basic and acidic residues; the sequence is GLERIERRREEKDRAEKTT.

This sequence belongs to the DEAD box helicase family. DDX46/PRP5 subfamily.

The protein localises to the nucleus. It carries out the reaction ATP + H2O = ADP + phosphate + H(+). In terms of biological role, ATP-dependent RNA helicase involved spliceosome assembly and in nuclear splicing. Catalyzes an ATP-dependent conformational change of U2 snRNP. Bridges U1 and U2 snRNPs and enables stable U2 snRNP association with intron RNA. In Cryptococcus neoformans var. neoformans serotype D (strain B-3501A) (Filobasidiella neoformans), this protein is Pre-mRNA-processing ATP-dependent RNA helicase PRP5 (PRP5).